We begin with the raw amino-acid sequence, 252 residues long: Hsp70-Hsp90 organising protein (252 aa).

3 TPR repeats span residues alanine 7 to aspartate 40, histidine 41 to tryptophan 74, and proline 75 to asparagine 108. Residues glutamate 197–glutamate 239 adopt a coiled-coil conformation. Residues asparagine 199–asparagine 252 are disordered. Composition is skewed to basic and acidic residues over residues alanine 201–lysine 233 and glycine 243–asparagine 252.

In terms of assembly, monomer. Homodimer. Forms a complex composed of HOP and chaperones HSP70 and HSP90; the interaction is stronger in the absence of ATP. Interacts (via TPR 1, 2, 3, 7, 8 and 9 repeats) with HSP70 (via C-terminus); the interaction is direct and is stronger in the absence of ATP. Interacts (via TPR 4, 5 and 6 repeats) with HSP90 (via C-terminus); the interaction is direct.

Its subcellular location is the cytoplasm. Functionally, acts as a co-chaperone and mediates the association of the chaperones HSP70 and HSP90 probably facilitating substrate transfer from HSP70 to HSP90. Stimulates HSP70 ATPase activity and, in contrast, inhibits HSP90 ATPase activity. In Plasmodium falciparum, this protein is Hsp70-Hsp90 organising protein.